A 362-amino-acid polypeptide reads, in one-letter code: Serpentine receptor class delta-2 (362 aa).

A run of 7 helical transmembrane segments spans residues 27–47 (LSCL…YLIW), 57–77 (YAIY…ISFF), 104–124 (FCYF…WILL), 144–164 (LIRN…VYVF), 209–229 (LISI…ILYF), 264–284 (GIPI…FGII), and 292–312 (ITFR…IIFV).

Belongs to the nematode receptor-like protein srd family.

It is found in the membrane. Its function is as follows. Thought to be a chemosensory receptor. The polypeptide is Serpentine receptor class delta-2 (srd-2) (Caenorhabditis elegans).